Consider the following 219-residue polypeptide: Occludin/ELL domain-containing protein 1 (219 aa).

The disordered stretch occupies residues 1–110 (MQIHAGPASR…DYELKYPPVT (110 aa)). Low complexity predominate over residues 17 to 43 (LARLSGPEATCNSRPAARGRQRAAAPR). Basic and acidic residues predominate over residues 72-93 (VFADELRPREPLHPEKHPRDLG). Residues 100 to 210 (PDYELKYPPV…QIRKFDDQQD (111 aa)) enclose the OCEL domain.

This sequence belongs to the ELL/occludin family.

The chain is Occludin/ELL domain-containing protein 1 (Ocel1) from Mus musculus (Mouse).